The primary structure comprises 439 residues: Adenylosuccinate synthetase (439 aa).

GTP-binding positions include 13-19 (GDEGKGK) and 41-43 (GHT). Residue Asp14 is the Proton acceptor of the active site. Residues Asp14 and Gly41 each contribute to the Mg(2+) site. IMP-binding positions include 14–17 (DEGK), 39–42 (NAGH), Thr130, Arg144, Gln226, Thr241, and Arg313. The Proton donor role is filled by His42. 309-315 (ASTGRQR) lines the substrate pocket. GTP-binding positions include Arg315, 341 to 343 (KLD), and 422 to 424 (STG).

This sequence belongs to the adenylosuccinate synthetase family. As to quaternary structure, homodimer. It depends on Mg(2+) as a cofactor.

It localises to the cytoplasm. It carries out the reaction IMP + L-aspartate + GTP = N(6)-(1,2-dicarboxyethyl)-AMP + GDP + phosphate + 2 H(+). The protein operates within purine metabolism; AMP biosynthesis via de novo pathway; AMP from IMP: step 1/2. Functionally, plays an important role in the de novo pathway of purine nucleotide biosynthesis. Catalyzes the first committed step in the biosynthesis of AMP from IMP. The chain is Adenylosuccinate synthetase from Acinetobacter baylyi (strain ATCC 33305 / BD413 / ADP1).